The sequence spans 687 residues: Acetyl-coenzyme A synthetase 2 (687 aa).

CoA-binding positions include 206–209 (RGGK) and Thr325. ATP is bound by residues 401 to 403 (GEP), 425 to 430 (DTMWQT), Asp516, and Arg531. Ser539 contributes to the CoA binding site. Arg542 contacts ATP. Arg617 provides a ligand contact to CoA.

The protein belongs to the ATP-dependent AMP-binding enzyme family.

It catalyses the reaction acetate + ATP + CoA = acetyl-CoA + AMP + diphosphate. This chain is Acetyl-coenzyme A synthetase 2 (ACS2), found in Eremothecium gossypii (strain ATCC 10895 / CBS 109.51 / FGSC 9923 / NRRL Y-1056) (Yeast).